The chain runs to 345 residues: Phenylalanine--tRNA ligase alpha subunit (345 aa).

Residue Glu-259 coordinates Mg(2+).

It belongs to the class-II aminoacyl-tRNA synthetase family. Phe-tRNA synthetase alpha subunit type 1 subfamily. Tetramer of two alpha and two beta subunits. Mg(2+) is required as a cofactor.

Its subcellular location is the cytoplasm. The catalysed reaction is tRNA(Phe) + L-phenylalanine + ATP = L-phenylalanyl-tRNA(Phe) + AMP + diphosphate + H(+). In Lactococcus lactis subsp. cremoris (strain MG1363), this protein is Phenylalanine--tRNA ligase alpha subunit.